Reading from the N-terminus, the 312-residue chain is Pantothenate kinase (312 aa).

Position 97–104 (97–104) interacts with ATP; the sequence is GSVAVGKS.

This sequence belongs to the prokaryotic pantothenate kinase family.

It is found in the cytoplasm. The enzyme catalyses (R)-pantothenate + ATP = (R)-4'-phosphopantothenate + ADP + H(+). It participates in cofactor biosynthesis; coenzyme A biosynthesis; CoA from (R)-pantothenate: step 1/5. In Mycobacterium leprae (strain TN), this protein is Pantothenate kinase (coaA).